Reading from the N-terminus, the 93-residue chain is Alpha-defensin 10 (93 aa).

Positions 1 to 19 (MKTLVLLSALVLLAFQVQA) are cleaved as a signal peptide. Residues 20-58 (DPIQNTDEETKTEEQPGEDDQAVSVSFGDPEGSSLQEES) constitute a propeptide that is removed on maturation. Residues 22 to 56 (IQNTDEETKTEEQPGEDDQAVSVSFGDPEGSSLQE) form a disordered region. Intrachain disulfides connect Cys-64–Cys-92, Cys-66–Cys-81, and Cys-71–Cys-91.

The protein belongs to the alpha-defensin family. In terms of tissue distribution, paneth cells of the small bowel.

It is found in the secreted. In terms of biological role, probably contributes to the antimicrobial barrier function of the small bowel mucosa. The protein is Alpha-defensin 10 (Defa10) of Mus musculus (Mouse).